The chain runs to 126 residues: Flagellar protein FliT (126 aa).

The tract at residues M1–T50 is required for homodimerization. Positions M60–K98 are fliD binding.

The protein belongs to the FliT family. Homodimer. Interacts with FliD and FlhC.

Its subcellular location is the cytoplasm. It localises to the cytosol. Functionally, dual-function protein that regulates the transcription of class 2 flagellar operons and that also acts as an export chaperone for the filament-capping protein FliD. As a transcriptional regulator, acts as an anti-FlhDC factor; it directly binds FlhC, thus inhibiting the binding of the FlhC/FlhD complex to class 2 promoters, resulting in decreased expression of class 2 flagellar operons. As a chaperone, effects FliD transition to the membrane by preventing its premature polymerization, and by directing it to the export apparatus. The polypeptide is Flagellar protein FliT (Pectobacterium atrosepticum (strain SCRI 1043 / ATCC BAA-672) (Erwinia carotovora subsp. atroseptica)).